A 335-amino-acid chain; its full sequence is tRNA (adenine(58)-N(1))-methyltransferase catalytic subunit TRM61 (335 aa).

S-adenosyl-L-methionine contacts are provided by residues 114-116 (SAS), Glu135, Arg140, 162-163 (DV), and Asp183. Residues 271–281 (VMKKGPSEEPP) show a composition bias toward basic and acidic residues. Residues 271-302 (VMKKGPSEEPPAKLQKTDNGYKTPKKSTKVKE) form a disordered region.

It belongs to the class I-like SAM-binding methyltransferase superfamily. TRM61 family. As to quaternary structure, heterotetramer; composed of two copies of TRM6 and two copies of TRM61.

It is found in the nucleus. It carries out the reaction adenosine(58) in tRNA + S-adenosyl-L-methionine = N(1)-methyladenosine(58) in tRNA + S-adenosyl-L-homocysteine + H(+). Its function is as follows. Catalytic subunit of tRNA (adenine-N(1)-)-methyltransferase, which catalyzes the formation of N(1)-methyladenine at position 58 (m1A58) in initiator methionyl-tRNA. The polypeptide is tRNA (adenine(58)-N(1))-methyltransferase catalytic subunit TRM61 (TRM61) (Candida albicans (strain SC5314 / ATCC MYA-2876) (Yeast)).